The primary structure comprises 1209 residues: DNA-directed RNA polymerase subunit beta'' (1209 aa).

Positions 233, 308, 315, and 318 each coordinate Zn(2+).

Belongs to the RNA polymerase beta' chain family. RpoC2 subfamily. In terms of assembly, in plastids the minimal PEP RNA polymerase catalytic core is composed of four subunits: alpha, beta, beta', and beta''. When a (nuclear-encoded) sigma factor is associated with the core the holoenzyme is formed, which can initiate transcription. Zn(2+) is required as a cofactor.

The protein resides in the plastid. It is found in the chloroplast. It catalyses the reaction RNA(n) + a ribonucleoside 5'-triphosphate = RNA(n+1) + diphosphate. Its function is as follows. DNA-dependent RNA polymerase catalyzes the transcription of DNA into RNA using the four ribonucleoside triphosphates as substrates. This chain is DNA-directed RNA polymerase subunit beta'', found in Pinus koraiensis (Korean pine).